Consider the following 1827-residue polypeptide: Phenolphthiocerol/phthiocerol polyketide synthase subunit C (1827 aa).

In terms of domain architecture, Ketosynthase family 3 (KS3) spans 35-461 (CEPVAVVGIG…GTNAHVVVEQ (427 aa)). Active-site for beta-ketoacyl synthase activity residues include cysteine 207, histidine 342, and histidine 383. Residues 566-876 (VFVYSGQGSQ…LAAVGVAASE (311 aa)) are acyltransferase. Serine 654 functions as the For malonyltransferase activity in the catalytic mechanism. An N-terminal hotdog fold region spans residues 910 to 1037 (HPLLGAHIEM…AKVEQSPREC (128 aa)). The segment at 910-1076 (HPLLGAHIEM…QHHGPAFAAL (167 aa)) is dehydratase. Residues 910-1198 (HPLLGAHIEM…LRRVERRAVP (289 aa)) form the PKS/mFAS DH domain. Histidine 942 functions as the Proton acceptor; for dehydratase activity in the catalytic mechanism. The interval 1050–1198 (GTTVSPADFY…LRRVERRAVP (149 aa)) is C-terminal hotdog fold. Aspartate 1111 acts as the Proton donor; for dehydratase activity in catalysis. The beta-ketoacyl reductase stretch occupies residues 1439-1617 (ASYVVTGGLG…VINWGPWSEV (179 aa)). NADP(+) is bound at residue 1440 to 1485 (SYVVTGGLGGLGLVVARWLVDRGAGRVVLGGRSDPTDEQCNVLAEL). The Carrier domain maps to 1706–1785 (RAVTERMCAR…DLTADLMRQL (80 aa)). Serine 1745 carries the post-translational modification O-(pantetheine 4'-phosphoryl)serine. Basic residues predominate over residues 1807–1820 (RAAARHGAAMRRRP). A disordered region spans residues 1807–1827 (RAAARHGAAMRRRPKPEVQGG).

NADP(+) is required as a cofactor. Requires pantetheine 4'-phosphate as cofactor.

It catalyses the reaction icosanoyl-[(phenol)carboxyphthiodiolenone synthase] + 2 (S)-methylmalonyl-CoA + 3 malonyl-CoA + 5 NADPH + 10 H(+) = C32-carboxyphthiodiolenone-[(phenol)carboxyphthiodiolenone synthase] + 5 CO2 + 5 NADP(+) + 5 CoA + 2 H2O. The enzyme catalyses docosanoyl-[(phenol)carboxyphthiodiolenone synthase] + 2 (S)-methylmalonyl-CoA + 3 malonyl-CoA + 5 NADPH + 10 H(+) = C34-carboxyphthiodiolenone-[(phenol)carboxyphthiodiolenone synthase] + 5 CO2 + 5 NADP(+) + 5 CoA + 2 H2O. The catalysed reaction is 17-(4-hydroxyphenyl)heptadecanoyl-[(phenol)carboxyphthiodiolenone synthase] + 2 (S)-methylmalonyl-CoA + 3 malonyl-CoA + 5 NADPH + 10 H(+) = C35-(phenol)carboxyphthiodiolenone-[(phenol)carboxyphthiodiolenone synthase] + 5 CO2 + 5 NADP(+) + 5 CoA + 2 H2O. It carries out the reaction 19-(4-hydroxyphenyl)nonadecanoyl-[(phenol)carboxyphthiodiolenone synthase] + 2 (S)-methylmalonyl-CoA + 3 malonyl-CoA + 5 NADPH + 10 H(+) = C37-(phenol)carboxyphthiodiolenone-[(phenol)carboxyphthiodiolenone synthase] + 5 CO2 + 5 NADP(+) + 5 CoA + 2 H2O. It participates in lipid metabolism; fatty acid biosynthesis. In terms of biological role, part of the PpsABCDE complex involved in the biosynthesis of the lipid core common to phthiocerols and phenolphthiocerols by successive additions of malonyl-CoA or methylmalonyl-CoA extender units. PpsA can accept as substrate the activated forms of either icosanoyl (C20), docosanoyl (C22) or lignoceroyl (C24) groups from FadD26, or a (4-hydroxyphenyl)-C17 or (4-hydroxyphenyl)-C19 fatty acyl from FadD29. PpsA initiates the biosynthesis and extends its substrate using a malonyl-CoA extender unit. The PpsB and PpsC proteins add the second and third malonyl-CoA extender units. PpsD adds an (R)-methylmalonyl unit and PpsE adds a second (R)-methylmalonyl unit. The incorporation of the methylmalonyl units results in formation of two branched methyl groups in the elongated product. In Mycobacterium tuberculosis (strain CDC 1551 / Oshkosh), this protein is Phenolphthiocerol/phthiocerol polyketide synthase subunit C (ppsD).